The primary structure comprises 125 residues: Large ribosomal subunit protein uL22 (125 aa).

It belongs to the universal ribosomal protein uL22 family. As to quaternary structure, part of the 50S ribosomal subunit.

Its function is as follows. This protein binds specifically to 23S rRNA; its binding is stimulated by other ribosomal proteins, e.g. L4, L17, and L20. It is important during the early stages of 50S assembly. It makes multiple contacts with different domains of the 23S rRNA in the assembled 50S subunit and ribosome. The globular domain of the protein is located near the polypeptide exit tunnel on the outside of the subunit, while an extended beta-hairpin is found that lines the wall of the exit tunnel in the center of the 70S ribosome. This is Large ribosomal subunit protein uL22 from Novosphingobium aromaticivorans (strain ATCC 700278 / DSM 12444 / CCUG 56034 / CIP 105152 / NBRC 16084 / F199).